A 423-amino-acid polypeptide reads, in one-letter code: Putative competence-damage inducible protein (423 aa).

It belongs to the CinA family.

This Streptococcus pyogenes serotype M18 (strain MGAS8232) protein is Putative competence-damage inducible protein.